We begin with the raw amino-acid sequence, 141 residues long: Large ribosomal subunit protein uL16 (141 aa).

The protein belongs to the universal ribosomal protein uL16 family. In terms of assembly, part of the 50S ribosomal subunit.

Its function is as follows. Binds 23S rRNA and is also seen to make contacts with the A and possibly P site tRNAs. The sequence is that of Large ribosomal subunit protein uL16 from Thermus thermophilus (strain ATCC BAA-163 / DSM 7039 / HB27).